The chain runs to 380 residues: E3 ubiquitin-protein ligase Iruka (380 aa).

The interval 50 to 92 is disordered; sequence APEMDSSTAGASGSARSGSSGSGSSGSHDTLSRGSSSSGSQVN. Composition is skewed to low complexity over residues 55 to 68 and 74 to 89; these read SSTA…RSGS and SGSH…SSGS. The RING-type; atypical zinc-finger motif lies at 253 to 294; the sequence is CSICWDDFKIDETVRKLPCSHLYHENCIVPWLNLHSTCPICR. The tract at residues 317–367 is disordered; that stretch reads EMAADGSNSERRSASTATGTDNPSPANNPSQAAAEGGRTRPDANPAQAARN. Over residues 338-350 the composition is skewed to low complexity; that stretch reads NPSPANNPSQAAA.

As to quaternary structure, interacts (via N-terminus) with CG7546 (via Ubl domain).

It carries out the reaction S-ubiquitinyl-[E2 ubiquitin-conjugating enzyme]-L-cysteine + [acceptor protein]-L-lysine = [E2 ubiquitin-conjugating enzyme]-L-cysteine + N(6)-ubiquitinyl-[acceptor protein]-L-lysine.. It participates in protein modification; protein ubiquitination. In terms of biological role, E3 ubiquitin-protein ligase that mediates E2-dependent, 'Lys-48'- and/or 'Lys-63'-linked polyubiquitination of substrates. Recognizes miRNA-empty Ago1 and triggers its degradation via polyubiquitination independently of the Bag6 complex. By targeting miRNA-empty Ago1, eliminates dysfunctional Ago1 not able to bind miRNA and thereby plays a role in the quality control of miRNA-mediated silencing. This is E3 ubiquitin-protein ligase Iruka from Drosophila melanogaster (Fruit fly).